The primary structure comprises 738 residues: Glucan 1,4-alpha-glucosidase SusB (738 aa).

The first 21 residues, 1 to 21 (MKKRKILSLIAFLCISFIANA), serve as a signal peptide directing secretion. Glu194 is a binding site for Ca(2+). Substrate contacts are provided by residues 215 to 217 (PNS), 437 to 439 (HHE), and 507 to 508 (HE). Residues Glu508, Glu526, and Glu532 each contribute to the Ca(2+) site. The Proton donor/acceptor role is filled by Glu532.

This sequence belongs to the glycosyl hydrolase 97 family. In terms of assembly, monomer. Requires Ca(2+) as cofactor.

The protein resides in the periplasm. It carries out the reaction Hydrolysis of terminal (1-&gt;4)-linked alpha-D-glucose residues successively from non-reducing ends of the chains with release of beta-D-glucose.. Its pathway is glycan degradation; starch degradation. Glucoamylase that hydrolyzes alpha-1,4-glucosidic linkages, alpha-1,6-, alpha-1,3- and alpha-1,2-glucosidic linkages during starch degradation. In Bacteroides thetaiotaomicron (strain ATCC 29148 / DSM 2079 / JCM 5827 / CCUG 10774 / NCTC 10582 / VPI-5482 / E50), this protein is Glucan 1,4-alpha-glucosidase SusB (susB).